A 663-amino-acid polypeptide reads, in one-letter code: Translation factor GUF1, mitochondrial (663 aa).

A mitochondrion-targeting transit peptide spans 1–37; sequence MRGCLQSVRLLTTALGQSPRRPLPFAFRLPPNASRLF. In terms of domain architecture, tr-type G spans 65–245; that stretch reads ERYRNFCIVA…TIVEQIPAPI (181 aa). GTP contacts are provided by residues 74-81, 138-142, and 192-195; these read AHVDHGKS, DTPGH, and NKVD.

Belongs to the TRAFAC class translation factor GTPase superfamily. Classic translation factor GTPase family. LepA subfamily.

It localises to the mitochondrion inner membrane. It catalyses the reaction GTP + H2O = GDP + phosphate + H(+). In terms of biological role, promotes mitochondrial protein synthesis. May act as a fidelity factor of the translation reaction, by catalyzing a one-codon backward translocation of tRNAs on improperly translocated ribosomes. Binds to mitochondrial ribosomes in a GTP-dependent manner. This chain is Translation factor GUF1, mitochondrial, found in Uncinocarpus reesii (strain UAMH 1704).